We begin with the raw amino-acid sequence, 278 residues long: tRNA pseudouridine synthase A (278 aa).

Asp51 acts as the Nucleophile in catalysis. Residue Tyr109 participates in substrate binding.

It belongs to the tRNA pseudouridine synthase TruA family. Homodimer.

It carries out the reaction uridine(38/39/40) in tRNA = pseudouridine(38/39/40) in tRNA. Formation of pseudouridine at positions 38, 39 and 40 in the anticodon stem and loop of transfer RNAs. The polypeptide is tRNA pseudouridine synthase A (Paracidovorax citrulli (strain AAC00-1) (Acidovorax citrulli)).